The chain runs to 101 residues: uncharacterized protein (101 aa).

The protein localises to the plastid. It is found in the chloroplast. This is an uncharacterized protein from Chlamydomonas reinhardtii (Chlamydomonas smithii).